The chain runs to 465 residues: UDP-N-acetylmuramoylalanine--D-glutamate ligase (465 aa).

Residue 115–121 participates in ATP binding; that stretch reads GTDGKTT.

The protein belongs to the MurCDEF family.

It localises to the cytoplasm. The enzyme catalyses UDP-N-acetyl-alpha-D-muramoyl-L-alanine + D-glutamate + ATP = UDP-N-acetyl-alpha-D-muramoyl-L-alanyl-D-glutamate + ADP + phosphate + H(+). It participates in cell wall biogenesis; peptidoglycan biosynthesis. Its function is as follows. Cell wall formation. Catalyzes the addition of glutamate to the nucleotide precursor UDP-N-acetylmuramoyl-L-alanine (UMA). This is UDP-N-acetylmuramoylalanine--D-glutamate ligase from Chlorobaculum tepidum (strain ATCC 49652 / DSM 12025 / NBRC 103806 / TLS) (Chlorobium tepidum).